A 367-amino-acid chain; its full sequence is D-alanine--D-alanine ligase (367 aa).

One can recognise an ATP-grasp domain in the interval 150 to 357; that stretch reads KKLLTAAGLP…YPTLLATMVE (208 aa). 178-233 is an ATP binding site; the sequence is RERLGLPVFVKPSRGGSSIGVSRVTAWDALPAAIELARRHDPKVIVEAAIPGRELE. Positions 312, 324, and 326 each coordinate Mg(2+).

This sequence belongs to the D-alanine--D-alanine ligase family. Mg(2+) serves as cofactor. Requires Mn(2+) as cofactor.

It is found in the cytoplasm. It carries out the reaction 2 D-alanine + ATP = D-alanyl-D-alanine + ADP + phosphate + H(+). The protein operates within cell wall biogenesis; peptidoglycan biosynthesis. Its function is as follows. Cell wall formation. The polypeptide is D-alanine--D-alanine ligase (Mycolicibacterium vanbaalenii (strain DSM 7251 / JCM 13017 / BCRC 16820 / KCTC 9966 / NRRL B-24157 / PYR-1) (Mycobacterium vanbaalenii)).